We begin with the raw amino-acid sequence, 1203 residues long: DNA-directed RNA polymerase subunit beta' (1203 aa).

Zn(2+) contacts are provided by Cys60, Cys62, Cys75, and Cys78. Mg(2+)-binding residues include Asp449, Asp451, and Asp453. 4 residues coordinate Zn(2+): Cys818, Cys892, Cys899, and Cys902.

It belongs to the RNA polymerase beta' chain family. The RNAP catalytic core consists of 2 alpha, 1 beta, 1 beta' and 1 omega subunit. When a sigma factor is associated with the core the holoenzyme is formed, which can initiate transcription. Mg(2+) is required as a cofactor. The cofactor is Zn(2+).

It carries out the reaction RNA(n) + a ribonucleoside 5'-triphosphate = RNA(n+1) + diphosphate. Functionally, DNA-dependent RNA polymerase catalyzes the transcription of DNA into RNA using the four ribonucleoside triphosphates as substrates. In Bacillus mycoides (strain KBAB4) (Bacillus weihenstephanensis), this protein is DNA-directed RNA polymerase subunit beta'.